The primary structure comprises 78 residues: Small ribosomal subunit protein uS17 (78 aa).

Belongs to the universal ribosomal protein uS17 family. Part of the 30S ribosomal subunit.

Its function is as follows. One of the primary rRNA binding proteins, it binds specifically to the 5'-end of 16S ribosomal RNA. This is Small ribosomal subunit protein uS17 from Maricaulis maris (strain MCS10) (Caulobacter maris).